The chain runs to 466 residues: ATP synthase subunit beta (466 aa).

156 to 163 (GGAGVGKT) is a binding site for ATP.

This sequence belongs to the ATPase alpha/beta chains family. As to quaternary structure, F-type ATPases have 2 components, CF(1) - the catalytic core - and CF(0) - the membrane proton channel. CF(1) has five subunits: alpha(3), beta(3), gamma(1), delta(1), epsilon(1). CF(0) has three main subunits: a(1), b(2) and c(9-12). The alpha and beta chains form an alternating ring which encloses part of the gamma chain. CF(1) is attached to CF(0) by a central stalk formed by the gamma and epsilon chains, while a peripheral stalk is formed by the delta and b chains.

The protein resides in the cell inner membrane. The catalysed reaction is ATP + H2O + 4 H(+)(in) = ADP + phosphate + 5 H(+)(out). Its function is as follows. Produces ATP from ADP in the presence of a proton gradient across the membrane. The catalytic sites are hosted primarily by the beta subunits. The sequence is that of ATP synthase subunit beta from Dechloromonas aromatica (strain RCB).